The following is a 494-amino-acid chain: Guanosine-5'-triphosphate,3'-diphosphate pyrophosphatase (494 aa).

Belongs to the GppA/Ppx family. GppA subfamily.

The catalysed reaction is guanosine 3'-diphosphate 5'-triphosphate + H2O = guanosine 3',5'-bis(diphosphate) + phosphate + H(+). Its pathway is purine metabolism; ppGpp biosynthesis; ppGpp from GTP: step 2/2. Catalyzes the conversion of pppGpp to ppGpp. Guanosine pentaphosphate (pppGpp) is a cytoplasmic signaling molecule which together with ppGpp controls the 'stringent response', an adaptive process that allows bacteria to respond to amino acid starvation, resulting in the coordinated regulation of numerous cellular activities. The protein is Guanosine-5'-triphosphate,3'-diphosphate pyrophosphatase of Shigella dysenteriae serotype 1 (strain Sd197).